Consider the following 365-residue polypeptide: Embryonic developmental protein tofu-6 (365 aa).

The RRM domain maps to 13–90 (AGFHIRNVPK…YSLKVSDHKN (78 aa)).

In terms of biological role, required maternally for early embryonic cell divisions. May have a role in DNA replication. This Caenorhabditis briggsae protein is Embryonic developmental protein tofu-6.